A 29-amino-acid polypeptide reads, in one-letter code: Brevinin-2Ee (29 aa).

C23 and C29 form a disulfide bridge.

This sequence belongs to the frog skin active peptide (FSAP) family. Brevinin subfamily. As to expression, expressed by the skin glands.

Its subcellular location is the secreted. Its function is as follows. Shows antibacterial activity against representative Gram-negative and Gram-positive bacterial species, and hemolytic activity. This is Brevinin-2Ee from Pelophylax lessonae (Pool frog).